Here is a 157-residue protein sequence, read N- to C-terminus: Small ribosomal subunit protein uS7 (157 aa).

Belongs to the universal ribosomal protein uS7 family. In terms of assembly, part of the 30S ribosomal subunit. Contacts proteins S9 and S11.

In terms of biological role, one of the primary rRNA binding proteins, it binds directly to 16S rRNA where it nucleates assembly of the head domain of the 30S subunit. Is located at the subunit interface close to the decoding center, probably blocks exit of the E-site tRNA. The protein is Small ribosomal subunit protein uS7 of Variovorax paradoxus (strain S110).